A 395-amino-acid chain; its full sequence is NADH-quinone oxidoreductase subunit D (395 aa).

This sequence belongs to the complex I 49 kDa subunit family. NDH-1 is composed of 14 different subunits. Subunits NuoB, C, D, E, F, and G constitute the peripheral sector of the complex.

The protein resides in the cell inner membrane. The enzyme catalyses a quinone + NADH + 5 H(+)(in) = a quinol + NAD(+) + 4 H(+)(out). Functionally, NDH-1 shuttles electrons from NADH, via FMN and iron-sulfur (Fe-S) centers, to quinones in the respiratory chain. The immediate electron acceptor for the enzyme in this species is believed to be a menaquinone. Couples the redox reaction to proton translocation (for every two electrons transferred, four hydrogen ions are translocated across the cytoplasmic membrane), and thus conserves the redox energy in a proton gradient. The sequence is that of NADH-quinone oxidoreductase subunit D from Chlorobium luteolum (strain DSM 273 / BCRC 81028 / 2530) (Pelodictyon luteolum).